Here is a 362-residue protein sequence, read N- to C-terminus: 3-dehydroquinate synthase (362 aa).

NAD(+)-binding positions include 70 to 75, 104 to 108, 128 to 129, lysine 141, lysine 150, and 168 to 171; these read EGEQYK, GVIGD, TT, and TLTT. 3 residues coordinate Zn(2+): glutamate 183, histidine 246, and histidine 263.

This sequence belongs to the sugar phosphate cyclases superfamily. Dehydroquinate synthase family. The cofactor is Co(2+). Zn(2+) serves as cofactor. Requires NAD(+) as cofactor.

Its subcellular location is the cytoplasm. The catalysed reaction is 7-phospho-2-dehydro-3-deoxy-D-arabino-heptonate = 3-dehydroquinate + phosphate. The protein operates within metabolic intermediate biosynthesis; chorismate biosynthesis; chorismate from D-erythrose 4-phosphate and phosphoenolpyruvate: step 2/7. Its function is as follows. Catalyzes the conversion of 3-deoxy-D-arabino-heptulosonate 7-phosphate (DAHP) to dehydroquinate (DHQ). This Histophilus somni (strain 2336) (Haemophilus somnus) protein is 3-dehydroquinate synthase.